A 463-amino-acid polypeptide reads, in one-letter code: Probable transport protein HsrA (463 aa).

The next 14 membrane-spanning stretches (helical) occupy residues 10 to 30, 49 to 69, 82 to 102, 107 to 127, 139 to 159, 165 to 185, 197 to 217, 225 to 245, 267 to 287, 298 to 318, 328 to 348, 354 to 374, 393 to 413, and 429 to 449; these read GLAW…TILN, MAII…AWAA, VFTF…ESLI, IQGI…IQAV, MATA…WLVI, WIFL…GSVM, WTGF…LDLL, SVTY…CGYA, IIAN…LPLM, MSGW…ILIG, TTLI…AWLD, TWII…FTSI, VLSI…SIIL, and AFSY…WSLM.

It belongs to the major facilitator superfamily. EmrB family.

It is found in the cell inner membrane. The protein is Probable transport protein HsrA (hsrA) of Haemophilus influenzae (strain ATCC 51907 / DSM 11121 / KW20 / Rd).